Reading from the N-terminus, the 212-residue chain is RING-H2 finger protein ATL68 (212 aa).

Residues 24–44 (LGLGYSIAIALGFLVLISTII) form a helical membrane-spanning segment. The RING-type; atypical zinc-finger motif lies at 136 to 178 (CSICLCEYMEEEMLRMMPECKHYFHVYCLDAWLKLNGSCPVCR). The interval 182–212 (LPTPQSTPQSTPLSEVVPLSQYAADRRRSRR) is disordered. The span at 185–195 (PQSTPQSTPLS) shows a compositional bias: low complexity.

Belongs to the RING-type zinc finger family. ATL subfamily.

The protein resides in the membrane. It catalyses the reaction S-ubiquitinyl-[E2 ubiquitin-conjugating enzyme]-L-cysteine + [acceptor protein]-L-lysine = [E2 ubiquitin-conjugating enzyme]-L-cysteine + N(6)-ubiquitinyl-[acceptor protein]-L-lysine.. Its pathway is protein modification; protein ubiquitination. The polypeptide is RING-H2 finger protein ATL68 (ATL68) (Arabidopsis thaliana (Mouse-ear cress)).